The chain runs to 91 residues: Small ribosomal subunit protein uS19 (91 aa).

It belongs to the universal ribosomal protein uS19 family.

Functionally, protein S19 forms a complex with S13 that binds strongly to the 16S ribosomal RNA. This chain is Small ribosomal subunit protein uS19, found in Aromatoleum aromaticum (strain DSM 19018 / LMG 30748 / EbN1) (Azoarcus sp. (strain EbN1)).